Reading from the N-terminus, the 253-residue chain is Triosephosphate isomerase (253 aa).

15–17 (NWK) is a binding site for substrate. Catalysis depends on H101, which acts as the Electrophile. E171 (proton acceptor) is an active-site residue. Residues G177, S216, and 237-238 (GG) contribute to the substrate site.

Belongs to the triosephosphate isomerase family. In terms of assembly, homodimer.

It localises to the cytoplasm. The catalysed reaction is D-glyceraldehyde 3-phosphate = dihydroxyacetone phosphate. Its pathway is carbohydrate biosynthesis; gluconeogenesis. It functions in the pathway carbohydrate degradation; glycolysis; D-glyceraldehyde 3-phosphate from glycerone phosphate: step 1/1. In terms of biological role, involved in the gluconeogenesis. Catalyzes stereospecifically the conversion of dihydroxyacetone phosphate (DHAP) to D-glyceraldehyde-3-phosphate (G3P). This chain is Triosephosphate isomerase, found in Caulobacter vibrioides (strain ATCC 19089 / CIP 103742 / CB 15) (Caulobacter crescentus).